The primary structure comprises 101 residues: Phosphoribosyl-AMP cyclohydrolase (101 aa).

Mg(2+) is bound at residue D71. C72 contacts Zn(2+). Mg(2+) contacts are provided by D73 and D75. Residues C88 and C95 each coordinate Zn(2+).

It belongs to the PRA-CH family. In terms of assembly, homodimer. Requires Mg(2+) as cofactor. The cofactor is Zn(2+).

Its subcellular location is the cytoplasm. The catalysed reaction is 1-(5-phospho-beta-D-ribosyl)-5'-AMP + H2O = 1-(5-phospho-beta-D-ribosyl)-5-[(5-phospho-beta-D-ribosylamino)methylideneamino]imidazole-4-carboxamide. The protein operates within amino-acid biosynthesis; L-histidine biosynthesis; L-histidine from 5-phospho-alpha-D-ribose 1-diphosphate: step 3/9. Catalyzes the hydrolysis of the adenine ring of phosphoribosyl-AMP. This Bacillus cereus (strain ZK / E33L) protein is Phosphoribosyl-AMP cyclohydrolase.